Consider the following 300-residue polypeptide: Transacylase cctO (300 aa).

A helical membrane pass occupies residues 52 to 72; sequence IVYVSLTFFVVSIGLNFILAI. Short sequence motifs (HXXHC) lie at residues 185–189 and 225–229; these read HQLGC and HVDQC. N-linked (GlcNAc...) asparagine glycosylation occurs at N270.

This sequence belongs to the ustYa family.

It localises to the membrane. It functions in the pathway mycotoxin biosynthesis. Transacylase; part of the gene cluster that mediates the biosynthesis of the mycotoxin cyclochlorotine, a hepatotoxic and carcinogenic cyclic chlorinated pentapeptide. Within the pathway, cctO catalyzes the intramolecular O,N-transacylation from isocyclochlorotine to cyclochlorotine. The NRPS cctN initially catalyzes the condensation of L-serine (Ser), Pro, L-2-aminobutyrate (2Abu), Ser, and beta-Phe in this order to produce isocyclotine. After the dichlorination of Pro2 catalyzed by cctP2 to produce isocyclochlorotine, the cctO-mediated transacylation of isocyclochlorotine can furnish cyclochlorotine. The subsequent hydroxylation of cyclochlorotine by cctR yields hydroxycyclochlorotine as the final product. CctP1 probably acts as a phenylalanine aminomutase and provides the uncommon building block beta-Phe. Furthermore, 2Abu can be synthesized from threonine by one of the threonine dehydratases and transaminases localized outside of the cluster. The functions of the remaining proteins encoded by the cluster, cctM and cctT, have not been identified yet. This is Transacylase cctO from Talaromyces islandicus (Penicillium islandicum).